The primary structure comprises 416 residues: Glutamyl-tRNA reductase (416 aa).

Substrate contacts are provided by residues 49–52 (TCNR), Ser105, 110–112 (EPQ), and Gln116. Cys50 functions as the Nucleophile in the catalytic mechanism. NADP(+) is bound at residue 185 to 190 (GAGETI).

The protein belongs to the glutamyl-tRNA reductase family. In terms of assembly, homodimer.

The enzyme catalyses (S)-4-amino-5-oxopentanoate + tRNA(Glu) + NADP(+) = L-glutamyl-tRNA(Glu) + NADPH + H(+). It participates in porphyrin-containing compound metabolism; protoporphyrin-IX biosynthesis; 5-aminolevulinate from L-glutamyl-tRNA(Glu): step 1/2. Catalyzes the NADPH-dependent reduction of glutamyl-tRNA(Glu) to glutamate 1-semialdehyde (GSA). The polypeptide is Glutamyl-tRNA reductase (Shewanella putrefaciens (strain CN-32 / ATCC BAA-453)).